Here is a 398-residue protein sequence, read N- to C-terminus: Argininosuccinate synthase (398 aa).

10–18 (AYSGGLDTS) contributes to the ATP binding site. Tyr-87 lines the L-citrulline pocket. An ATP-binding site is contributed by Gly-117. L-aspartate is bound by residues Thr-119, Asn-123, and Asp-124. An L-citrulline-binding site is contributed by Asn-123. 4 residues coordinate L-citrulline: Arg-127, Ser-175, Glu-260, and Tyr-272.

This sequence belongs to the argininosuccinate synthase family. Type 1 subfamily. In terms of assembly, homotetramer.

The protein localises to the cytoplasm. The enzyme catalyses L-citrulline + L-aspartate + ATP = 2-(N(omega)-L-arginino)succinate + AMP + diphosphate + H(+). It participates in amino-acid biosynthesis; L-arginine biosynthesis; L-arginine from L-ornithine and carbamoyl phosphate: step 2/3. The sequence is that of Argininosuccinate synthase from Lactococcus lactis subsp. lactis (strain IL1403) (Streptococcus lactis).